We begin with the raw amino-acid sequence, 103 residues long: Small ribosomal subunit protein uS10 (103 aa).

This sequence belongs to the universal ribosomal protein uS10 family. In terms of assembly, part of the 30S ribosomal subunit.

Its function is as follows. Involved in the binding of tRNA to the ribosomes. The polypeptide is Small ribosomal subunit protein uS10 (Vibrio cholerae serotype O1 (strain ATCC 39541 / Classical Ogawa 395 / O395)).